Here is a 518-residue protein sequence, read N- to C-terminus: Protein CYCLOPS (518 aa).

Residues 401–451 (DKKRKSLERYGSITSAVSDDKGDTTKKRRVERSRKMAEAKERNSTPSVPSD) form a disordered region. 2 short sequence motifs (nuclear localization signal) span residues 402 to 405 (KKRK) and 426 to 429 (KKRR). Positions 433–443 (SRKMAEAKERN) are enriched in basic and acidic residues. Residues 452–518 (MQAVLKRCEN…ERILSETEKM (67 aa)) adopt a coiled-coil conformation.

Belongs to the CYCLOPS family. In terms of assembly, forms homodimers. Interacts with CCAMK. Post-translationally, phosphorylated at the N-terminus by CCAMK. Expressed in roots.

It localises to the nucleus. Involved in symbiotic signaling. Required for root infection by symbiotic rhizobia, infection thread (IT) formation, and nodule development. Probably not involved in nodule organogenesis. Involved in arbuscular mycorrhizal (AM) symbiosis. Required for fungal infection of the outer cortical cell layers, and for arbuscule development during the AM symbiosis, by binding, as a complex comprising CCaMK, CYCLOPS, and DELLA, to RAM1 promoter cis element thus promoting its expression. Acts downstream of CCAMK. Binds to the promoter of ERN1 and strongly transactivates ERN1, a transcriptional regulator required for nodulation. The polypeptide is Protein CYCLOPS (Lotus japonicus (Lotus corniculatus var. japonicus)).